Reading from the N-terminus, the 95-residue chain is Large ribosomal subunit protein uL23 (95 aa).

The protein belongs to the universal ribosomal protein uL23 family. As to quaternary structure, part of the 50S ribosomal subunit. Contacts protein L29, and trigger factor when it is bound to the ribosome.

In terms of biological role, one of the early assembly proteins it binds 23S rRNA. One of the proteins that surrounds the polypeptide exit tunnel on the outside of the ribosome. Forms the main docking site for trigger factor binding to the ribosome. The sequence is that of Large ribosomal subunit protein uL23 from Bacillus subtilis (strain 168).